Reading from the N-terminus, the 190-residue chain is Embryo-specific protein ATS3B (190 aa).

Positions 1–24 (MASVRLFFTLISFVFIISTSVYES) are cleaved as a signal peptide. N-linked (GlcNAc...) asparagine glycosylation is present at N37. The 111-residue stretch at 48–158 (CAYTVIISTS…ESVWYGFNYC (111 aa)) folds into the PLAT domain.

As to quaternary structure, interacts with EULS3 (via N-terminus). As to expression, expressed in roots, rosette leaves, stems, cauline leaves and flowers.

Its subcellular location is the secreted. In terms of biological role, may play a role during embryo development. The polypeptide is Embryo-specific protein ATS3B (Arabidopsis thaliana (Mouse-ear cress)).